The sequence spans 283 residues: Homeobox protein BarH-like 2 (283 aa).

2 disordered regions span residues 107–141 and 198–283; these read AAAA…RRSR and KGGQ…PPLS. The segment covering 122–132 has biased composition (polar residues); the sequence is SSESETEQPTP. A DNA-binding region (homeobox) is located at residues 139 to 198; sequence RSRTIFTELQLMGLEKKFQKQKYLSTPDRLDLAQSLGLTQLQVKTWYQNRRMKWKKMVLK. The span at 268-277 shows a compositional bias: low complexity; sequence QPQELSEASS.

The protein belongs to the BAR homeobox family. In terms of tissue distribution, nervous system, particularly in the telencephalon, spinal cord, and dorsal root ganglia.

The protein localises to the nucleus. Transcription factor. Binds optimally to the DNA consensus sequence 5'-YYTAATGRTTTTY-3'. May control the expression of neural adhesion molecules such as L1 or Ng-CAM during embryonic development of both the central and peripherical nervous system. May be involved in controlling adhesive processes in keratinizing epithelia. The polypeptide is Homeobox protein BarH-like 2 (Barx2) (Mus musculus (Mouse)).